We begin with the raw amino-acid sequence, 293 residues long: Ribosomal protein L11 methyltransferase (293 aa).

4 residues coordinate S-adenosyl-L-methionine: Thr145, Gly166, Asp188, and Asn230.

This sequence belongs to the methyltransferase superfamily. PrmA family.

The protein localises to the cytoplasm. The enzyme catalyses L-lysyl-[protein] + 3 S-adenosyl-L-methionine = N(6),N(6),N(6)-trimethyl-L-lysyl-[protein] + 3 S-adenosyl-L-homocysteine + 3 H(+). Methylates ribosomal protein L11. The sequence is that of Ribosomal protein L11 methyltransferase from Pasteurella multocida (strain Pm70).